Reading from the N-terminus, the 581-residue chain is Arginine--tRNA ligase (581 aa).

Positions 122–132 match the 'HIGH' region motif; that stretch reads PNVAKPMHVGH.

The protein belongs to the class-I aminoacyl-tRNA synthetase family. Monomer.

The protein resides in the cytoplasm. It catalyses the reaction tRNA(Arg) + L-arginine + ATP = L-arginyl-tRNA(Arg) + AMP + diphosphate. The protein is Arginine--tRNA ligase of Francisella tularensis subsp. novicida (strain U112).